Consider the following 174-residue polypeptide: Regenerating islet-derived protein 3-alpha (174 aa).

Positions 1-25 (MLPRLSFNNVSWTLLYYLFIFQVRG) are cleaved as a signal peptide. A propeptide spanning residues 26–36 (EDSQKAVPSTR) is cleaved from the precursor. Cystine bridges form between cysteine 39–cysteine 50, cysteine 67–cysteine 170, and cysteine 145–cysteine 162. The C-type lectin domain maps to 46–171 (YRSYCYTLVT…CDVELPFVCK (126 aa)). Residues 102-117 (WIWLHDPTMGQQPNGG) form a sufficient to activate EXTL3 region. Histidine 106 and glutamate 120 together coordinate Zn(2+).

In terms of assembly, forms a hexameric membrane-permeabilizing oligomeric pore on membrane phospholipids. The hexamer is formed by three dimers related by helical symmetry. Forms filaments, filamentation traps pore complexes and limits damage to host cells. Interacts with EXTL3. Post-translationally, proteolytic processing by trypsin removes an inhibitory N-terminal propeptide and is essential for peptidoglycan binding and antibacterial activity. Low expression found in healthy pancreas.

It is found in the secreted. Bactericidal C-type lectin. The lack of the EPN motif may explain its inability to bind peptidoglycan. Its function is as follows. Acts as a hormone in response to different stimuli like anti-inflammatory signals, such as IL17A, or gut microbiome. Secreted by different cell types to activate its receptor EXTL3 and induce cell specific signaling pathways. Induced by IL17A in keratinocytes, regulates keratinocyte proliferation and differentiation after skin injury via activation of EXTL3-PI3K-AKT signaling pathway. In parallel, inhibits skin inflammation through the inhibition of inflammatory cytokines such as IL6 and TNF. In pancreas, is able to permealize beta-cells membrane and stimulate their proliferation. The polypeptide is Regenerating islet-derived protein 3-alpha (Reg3a) (Rattus norvegicus (Rat)).